Here is a 203-residue protein sequence, read N- to C-terminus: uncharacterized protein (203 aa).

An N-terminal signal peptide occupies residues 1 to 23; the sequence is MKKIYKALISSLLLSTSINVAYA. The 64-residue stretch at 24–87 folds into the SH3b domain; sequence ETQYVTENLS…ILNSDLSSTP (64 aa). Residues 167 to 189 traverse the membrane as a helical segment; it reads IAIQWFIYGGSVLGVGLLFGLLI.

The protein to E.coli YgiM.

It is found in the membrane. This is an uncharacterized protein from Haemophilus influenzae (strain ATCC 51907 / DSM 11121 / KW20 / Rd).